A 102-amino-acid polypeptide reads, in one-letter code: Small ribosomal subunit protein uS10 (102 aa).

Belongs to the universal ribosomal protein uS10 family. As to quaternary structure, part of the 30S ribosomal subunit.

Involved in the binding of tRNA to the ribosomes. The chain is Small ribosomal subunit protein uS10 from Geotalea daltonii (strain DSM 22248 / JCM 15807 / FRC-32) (Geobacter daltonii).